The primary structure comprises 502 residues: Glycerol kinase (502 aa).

T13 serves as a coordination point for ADP. ATP-binding residues include T13, T14, and S15. Residue T13 participates in sn-glycerol 3-phosphate binding. R17 provides a ligand contact to ADP. 4 residues coordinate sn-glycerol 3-phosphate: R83, E84, Y136, and D246. Glycerol-binding residues include R83, E84, Y136, D246, and Q247. ADP-binding residues include T268 and G311. 4 residues coordinate ATP: T268, G311, Q315, and G412. The ADP site is built by G412 and N416.

The protein belongs to the FGGY kinase family.

The catalysed reaction is glycerol + ATP = sn-glycerol 3-phosphate + ADP + H(+). The protein operates within polyol metabolism; glycerol degradation via glycerol kinase pathway; sn-glycerol 3-phosphate from glycerol: step 1/1. With respect to regulation, inhibited by fructose 1,6-bisphosphate (FBP). Its function is as follows. Key enzyme in the regulation of glycerol uptake and metabolism. Catalyzes the phosphorylation of glycerol to yield sn-glycerol 3-phosphate. This is Glycerol kinase from Francisella tularensis subsp. tularensis (strain FSC 198).